The primary structure comprises 261 residues: UPF0246 protein AZOSEA34360 (261 aa).

It belongs to the UPF0246 family.

The polypeptide is UPF0246 protein AZOSEA34360 (Aromatoleum aromaticum (strain DSM 19018 / LMG 30748 / EbN1) (Azoarcus sp. (strain EbN1))).